A 137-amino-acid polypeptide reads, in one-letter code: uncharacterized protein (137 aa).

Helical transmembrane passes span 20–39, 44–61, 86–105, and 109–131; these read YGKI…GYAV, WFIT…LSLV, VEIF…ALDL, and AALA…YGYY.

The protein localises to the cell membrane. This is an uncharacterized protein from Archaeoglobus fulgidus (strain ATCC 49558 / DSM 4304 / JCM 9628 / NBRC 100126 / VC-16).